The primary structure comprises 492 residues: MGKSETIAEGKDRYQAGVIPYKKMGYWEPDYQPKDTDIIAMFRITPQPGVDPEEAAAAVAGESSTATWTVVWTDRLTDCELYRAKAYRADLVPNTGEGTKNEAQYFAYIAYDLDLFEPGSIANLTASIIGNVFGFKAVKALRLEDMRIPVAYLKTFQGPATGVVVERERLDKFGRPLLGATTKPKLGLSGRNYGRVVYEALKGGLDFVKDDENINSQPFMHWRDRFLYCMEAVNKASAATGEVKGHYLNVTAATMEDMYERAEFAKSLGSVIIMIDLVVGYTAIQSMAKWARKNDMILHLHRAGNSTYSRQKNHGMNFRVICKWMRMAGVDHIHAGTVVGKLEGDPLMIKGFYDTLLDSHTPTSLEHGLFFDQDWASLNKVMPVASGGIHAGQMHQLIQYLGEDVILQFGGGTIGHPQGIQAGAVANRVALEAMILARNEGRDYVKEGPQILQDAAKWCSPLKAALDTWKDVTFNYESTDTADFVPTATASV.

Substrate contacts are provided by Asn-131 and Thr-181. Lys-183 acts as the Proton acceptor in catalysis. Residue Lys-185 participates in substrate binding. Residues Lys-209, Asp-211, and Glu-212 each contribute to the Mg(2+) site. Lys-209 is subject to N6-carboxylysine. The Proton acceptor role is filled by His-301. 3 residues coordinate substrate: Arg-302, His-334, and Ser-386.

The protein belongs to the RuBisCO large chain family. Type I subfamily. In terms of assembly, heterohexadecamer of 8 large chains and 8 small chains. Mg(2+) serves as cofactor.

The catalysed reaction is 2 (2R)-3-phosphoglycerate + 2 H(+) = D-ribulose 1,5-bisphosphate + CO2 + H2O. The enzyme catalyses D-ribulose 1,5-bisphosphate + O2 = 2-phosphoglycolate + (2R)-3-phosphoglycerate + 2 H(+). Functionally, ruBisCO catalyzes two reactions: the carboxylation of D-ribulose 1,5-bisphosphate, the primary event in carbon dioxide fixation, as well as the oxidative fragmentation of the pentose substrate. Both reactions occur simultaneously and in competition at the same active site. The polypeptide is Ribulose bisphosphate carboxylase large chain (Nitrosococcus oceani (strain ATCC 19707 / BCRC 17464 / JCM 30415 / NCIMB 11848 / C-107)).